The chain runs to 205 residues: Peptidyl-tRNA hydrolase (205 aa).

Tyr-18 contacts tRNA. Catalysis depends on His-23, which acts as the Proton acceptor. Tyr-69, Asn-71, and Asn-117 together coordinate tRNA.

This sequence belongs to the PTH family. As to quaternary structure, monomer.

Its subcellular location is the cytoplasm. It carries out the reaction an N-acyl-L-alpha-aminoacyl-tRNA + H2O = an N-acyl-L-amino acid + a tRNA + H(+). Hydrolyzes ribosome-free peptidyl-tRNAs (with 1 or more amino acids incorporated), which drop off the ribosome during protein synthesis, or as a result of ribosome stalling. Functionally, catalyzes the release of premature peptidyl moieties from peptidyl-tRNA molecules trapped in stalled 50S ribosomal subunits, and thus maintains levels of free tRNAs and 50S ribosomes. This is Peptidyl-tRNA hydrolase from Synechococcus sp. (strain CC9605).